The chain runs to 327 residues: Vacuolar protein sorting-associated protein 26A (327 aa).

Residues 306–327 (RTNFHQRFESPESQASAEQPEM) form a disordered region. Phosphoserine is present on Ser-315. Over residues 316-327 (PESQASAEQPEM) the composition is skewed to polar residues.

This sequence belongs to the VPS26 family. Component of the heterotrimeric retromer cargo-selective complex (CSC), also described as vacuolar protein sorting subcomplex (VPS), formed by VPS26 (VPS26A or VPS26B), VPS29 and VPS35. The CSC has a highly elongated structure with VPS26 and VPS29 binding independently at opposite distal ends of VPS35 as central platform. The CSC is believed to associate with variable sorting nexins to form functionally distinct retromer complex variants. The originally described retromer complex (also called SNX-BAR retromer) is a pentamer containing the CSC and a heterodimeric membrane-deforming subcomplex formed between SNX1 or SNX2 and SNX5 or SNX6 (also called SNX-BAR subcomplex); the respective CSC and SNX-BAR subcomplexes associate with low affinity. The CSC associates with SNX3 to form a SNX3-retromer complex. The CSC associates with SNX27, the WASH complex and the SNX-BAR subcomplex to form the SNX27-retromer complex. Interacts with VPS29, VPS35, SNX27, SNX1, SNX2, SNX5, SNX6, SNX3, RAB7A, ECPAS, EHD1, WASHC5, SORL1.

It is found in the cytoplasm. Its subcellular location is the endosome membrane. It localises to the early endosome. Functionally, acts as a component of the retromer cargo-selective complex (CSC). The CSC is believed to be the core functional component of retromer or respective retromer complex variants acting to prevent missorting of selected transmembrane cargo proteins into the lysosomal degradation pathway. The recruitment of the CSC to the endosomal membrane involves RAB7A and SNX3. The SNX-BAR retromer mediates retrograde transport of cargo proteins from endosomes to the trans-Golgi network (TGN) and is involved in endosome-to-plasma membrane transport for cargo protein recycling. The SNX3-retromer mediates the retrograde endosome-to-TGN transport of WLS distinct from the SNX-BAR retromer pathway. The SNX27-retromer is believed to be involved in endosome-to-plasma membrane trafficking and recycling of a broad spectrum of cargo proteins. The CSC complex seems to act as recruitment hub for other proteins, such as the WASH complex and TBC1D5. Required for retrograde transport of lysosomal enzyme receptor IGF2R. Required to regulate transcytosis of the polymeric immunoglobulin receptor (pIgR-pIgA). Required for the endosomal localization of WASHC2 (indicative for the WASH complex). Required for the endosomal localization of TBC1D5. Mediates retromer cargo recognition of SORL1 and is involved in trafficking of SORL1 implicated in sorting and processing of APP. Involved in retromer-independent lysosomal sorting of F2R. Involved in recycling of ADRB2. Acts redundantly with VSP26B in SNX-27 mediated endocytic recycling of SLC2A1/GLUT1. Enhances the affinity of SNX27 for PDZ-binding motifs in cargo proteins. In Rattus norvegicus (Rat), this protein is Vacuolar protein sorting-associated protein 26A (Vps26a).